The primary structure comprises 357 residues: sn-glycerol-3-phosphate import ATP-binding protein UgpC (357 aa).

The ABC transporter domain occupies Leu4 to Ile235. Position 37-44 (Gly37–Ser44) interacts with ATP.

Belongs to the ABC transporter superfamily. sn-glycerol-3-phosphate importer (TC 3.A.1.1.3) family. In terms of assembly, the complex is composed of two ATP-binding proteins (UgpC), two transmembrane proteins (UgpA and UgpE) and a solute-binding protein (UgpB).

The protein resides in the cell inner membrane. It catalyses the reaction sn-glycerol 3-phosphate(out) + ATP + H2O = sn-glycerol 3-phosphate(in) + ADP + phosphate + H(+). Its function is as follows. Part of the ABC transporter complex UgpBAEC involved in sn-glycerol-3-phosphate (G3P) import. Responsible for energy coupling to the transport system. This is sn-glycerol-3-phosphate import ATP-binding protein UgpC from Yersinia pseudotuberculosis serotype I (strain IP32953).